The chain runs to 163 residues: Crossover junction endodeoxyribonuclease RuvC (163 aa).

Residues D7, E68, and H142 contribute to the active site. Residues D7, E68, and H142 each coordinate Mg(2+).

Belongs to the RuvC family. As to quaternary structure, homodimer which binds Holliday junction (HJ) DNA. The HJ becomes 2-fold symmetrical on binding to RuvC with unstacked arms; it has a different conformation from HJ DNA in complex with RuvA. In the full resolvosome a probable DNA-RuvA(4)-RuvB(12)-RuvC(2) complex forms which resolves the HJ. It depends on Mg(2+) as a cofactor.

It is found in the cytoplasm. It catalyses the reaction Endonucleolytic cleavage at a junction such as a reciprocal single-stranded crossover between two homologous DNA duplexes (Holliday junction).. Functionally, the RuvA-RuvB-RuvC complex processes Holliday junction (HJ) DNA during genetic recombination and DNA repair. Endonuclease that resolves HJ intermediates. Cleaves cruciform DNA by making single-stranded nicks across the HJ at symmetrical positions within the homologous arms, yielding a 5'-phosphate and a 3'-hydroxyl group; requires a central core of homology in the junction. The consensus cleavage sequence is 5'-(A/T)TT(C/G)-3'. Cleavage occurs on the 3'-side of the TT dinucleotide at the point of strand exchange. HJ branch migration catalyzed by RuvA-RuvB allows RuvC to scan DNA until it finds its consensus sequence, where it cleaves and resolves the cruciform DNA. This Anaplasma phagocytophilum (strain HZ) protein is Crossover junction endodeoxyribonuclease RuvC.